Here is a 1318-residue protein sequence, read N- to C-terminus: Serine/threonine-protein kinase ppk18 (1318 aa).

The disordered stretch occupies residues 431 to 485; that stretch reads PSVSPEEVHDISQFNHRNDPPITAASVDSSNSFSVHRSSTNHSSTNSGSPNLSRR. Positions 462 to 479 are enriched in low complexity; the sequence is SFSVHRSSTNHSSTNSGS. A Protein kinase domain is found at 566–934; the sequence is YEIIKPISKG…INEIKEHPFF (369 aa). Residues 572-580 and lysine 595 contribute to the ATP site; that span reads ISKGTFGTV. Residue aspartate 690 is the Proton acceptor of the active site. Residues 935 to 1044 form the AGC-kinase C-terminal domain; the sequence is NGINWDDIFS…KNLSVLERAN (110 aa). Disordered stretches follow at residues 968 to 1022, 1058 to 1078, and 1091 to 1127; these read GAAE…FSEA, KLHI…DMPS, and SLMT…GPKS. The span at 972-1000 shows a compositional bias: polar residues; it reads SNMSSSVNSGEEVSKDNNVSQERGSQFLR. A compositionally biased stretch (polar residues) spans 1091–1115; sequence SLMTNQGSNFSSTDSTPRKSINSSD. Residues 1116-1127 are compositionally biased toward basic and acidic residues; sequence VESRSKTDGPKS. One can recognise a Response regulatory domain in the interval 1200–1316; sequence KALICVSKLN…LLRGYIARLC (117 aa).

The protein belongs to the protein kinase superfamily. Ser/Thr protein kinase family.

Its subcellular location is the cytoplasm. It carries out the reaction L-seryl-[protein] + ATP = O-phospho-L-seryl-[protein] + ADP + H(+). It catalyses the reaction L-threonyl-[protein] + ATP = O-phospho-L-threonyl-[protein] + ADP + H(+). The chain is Serine/threonine-protein kinase ppk18 (ppk18) from Schizosaccharomyces pombe (strain 972 / ATCC 24843) (Fission yeast).